The chain runs to 719 residues: Phosphoribosylformylglycinamidine synthase subunit PurL (719 aa).

His-47 is an active-site residue. 2 residues coordinate ATP: Tyr-50 and Lys-89. Glu-91 is a Mg(2+) binding site. Substrate contacts are provided by residues 92-95 and Arg-114; that span reads SHNH. The Proton acceptor role is filled by His-93. Asp-115 provides a ligand contact to Mg(2+). A substrate-binding site is contributed by Gln-238. Mg(2+) is bound at residue Asp-266. Residue 310 to 312 coordinates substrate; sequence ESQ. ATP is bound by residues Asp-488 and Gly-525. Asn-526 contacts Mg(2+). Ser-528 serves as a coordination point for substrate.

The protein belongs to the FGAMS family. In terms of assembly, monomer. Part of the FGAM synthase complex composed of 1 PurL, 1 PurQ and 2 PurS subunits.

The protein localises to the cytoplasm. It catalyses the reaction N(2)-formyl-N(1)-(5-phospho-beta-D-ribosyl)glycinamide + L-glutamine + ATP + H2O = 2-formamido-N(1)-(5-O-phospho-beta-D-ribosyl)acetamidine + L-glutamate + ADP + phosphate + H(+). It functions in the pathway purine metabolism; IMP biosynthesis via de novo pathway; 5-amino-1-(5-phospho-D-ribosyl)imidazole from N(2)-formyl-N(1)-(5-phospho-D-ribosyl)glycinamide: step 1/2. Part of the phosphoribosylformylglycinamidine synthase complex involved in the purines biosynthetic pathway. Catalyzes the ATP-dependent conversion of formylglycinamide ribonucleotide (FGAR) and glutamine to yield formylglycinamidine ribonucleotide (FGAM) and glutamate. The FGAM synthase complex is composed of three subunits. PurQ produces an ammonia molecule by converting glutamine to glutamate. PurL transfers the ammonia molecule to FGAR to form FGAM in an ATP-dependent manner. PurS interacts with PurQ and PurL and is thought to assist in the transfer of the ammonia molecule from PurQ to PurL. The protein is Phosphoribosylformylglycinamidine synthase subunit PurL of Ruegeria pomeroyi (strain ATCC 700808 / DSM 15171 / DSS-3) (Silicibacter pomeroyi).